The primary structure comprises 213 residues: MSSSPAILPVTNQQAATQSQPPINSHAFRTFLSRLSSSLRESLSQRRPWLELVDRSSFARPDSLTDSFSRIRKNLAYFKVNYSAIVSLVLAFSLLSHPFSLLVLLSLLGSWMFLYLFRSSDQPLVLFGRSFSDRETLLGLVLTTIVVVFMTSVGSLLTSALTIGIAIVCLHGAFRVPDDLFLDEQEPANAGLLSFIGNSAATSAAASVVAGRV.

A disordered region spans residues 1-21 (MSSSPAILPVTNQQAATQSQP). The next 5 membrane-spanning stretches (helical) occupy residues 75–94 (LAYFKVNYSAIVSLVLAFSL), 98–117 (PFSLLVLLSLLGSWMFLYLF), 137–157 (LLGLVLTTIVVVFMTSVGSLL), 161–181 (LTIGIAIVCLHGAFRVPDDLF), and 190–210 (AGLLSFIGNSAATSAAASVVA).

It belongs to the PRA1 family. In terms of assembly, interacts with PRA1B1, PRA1B3, PRA1B4, PRA1B5, PRA1B6 and PRA1E.

Its subcellular location is the endosome membrane. Its function is as follows. May be involved in both secretory and endocytic intracellular trafficking in the endosomal/prevacuolar compartments. The chain is PRA1 family protein B2 (PRA1B2) from Arabidopsis thaliana (Mouse-ear cress).